The sequence spans 212 residues: Histone H1.2 (212 aa).

Residues 1 to 17 show a composition bias toward low complexity; that stretch reads MSEAAPAAPAAAPPAEK. Residues 1-41 form a disordered region; the sequence is MSEAAPAAPAAAPPAEKAPAKKKAAKKPAGVRRKASGPPVS. An N-acetylserine modification is found at serine 2. A Phosphoserine modification is found at serine 2. Lysine 17 is modified (N6-acetyllysine). Basic residues predominate over residues 20–35; that stretch reads AKKKAAKKPAGVRRKA. Residues lysine 23, lysine 26, and lysine 27 each carry the N6-(2-hydroxyisobutyryl)lysine modification. Lysine 34 bears the N6-(beta-hydroxybutyryl)lysine; alternate mark. Lysine 34 carries the N6-crotonyllysine; alternate modification. Position 34 is an N6-methyllysine; alternate (lysine 34). Residues 36–109 enclose the H15 domain; it reads SGPPVSELIT…GASGSFKLNK (74 aa). Lysine 46 carries the N6-(2-hydroxyisobutyryl)lysine modification. Position 52 is an N6-(beta-hydroxybutyryl)lysine; alternate (lysine 52). Lysine 52 bears the N6-(2-hydroxyisobutyryl)lysine; alternate mark. Arginine 54 bears the Citrulline mark. At lysine 63 the chain carries N6-(2-hydroxyisobutyryl)lysine. Lysine 64 bears the N6-(beta-hydroxybutyryl)lysine; alternate mark. Residue lysine 64 is modified to N6-crotonyllysine; alternate. Lysine 64 carries the post-translational modification N6-(2-hydroxyisobutyryl)lysine; alternate. N6-(2-hydroxyisobutyryl)lysine occurs at positions 75 and 81. 2 positions are modified to N6-(beta-hydroxybutyryl)lysine; alternate: lysine 85 and lysine 90. N6-crotonyllysine; alternate is present on residues lysine 85, lysine 90, and lysine 97. Lysine 85, lysine 90, and lysine 97 each carry N6-(2-hydroxyisobutyryl)lysine; alternate. Lysine 97 is modified (N6-succinyllysine; alternate). The interval 98-212 is disordered; sequence GTGASGSFKL…KAKKVAAKKK (115 aa). Position 104 is a phosphoserine; by PKC (serine 104). Lysine 106 is subject to N6-(beta-hydroxybutyryl)lysine. Residues lysine 110, lysine 117, lysine 121, lysine 129, and lysine 136 each carry the N6-(2-hydroxyisobutyryl)lysine modification. A compositionally biased stretch (low complexity) spans 121–148; sequence KKAGAAKAKKPAGAAKKPKKATGAATPK. Threonine 146 is subject to Phosphothreonine. Lysine 148 is subject to N6-(2-hydroxyisobutyryl)lysine. A compositionally biased stretch (basic residues) spans 149-160; it reads KAAKKTPKKAKK. N6-crotonyllysine; alternate occurs at positions 159 and 168. N6-(2-hydroxyisobutyryl)lysine; alternate is present on residues lysine 159 and lysine 168. The span at 169 to 212 shows a compositional bias: basic residues; sequence KVAKSPKKAKVTKPKKVKSASKAVKPKAAKPKVAKAKKVAAKKK. N6-methyllysine; by EHMT1 and EHMT2 is present on lysine 186. The residue at position 187 (serine 187) is an ADP-ribosylserine. At lysine 212 the chain carries N6-(2-hydroxyisobutyryl)lysine.

It belongs to the histone H1/H5 family. In terms of assembly, interacts with TSC22D1 isoform 2. Post-translationally, H1 histones are progressively phosphorylated during the cell cycle, becoming maximally phosphorylated during late G2 phase and M phase, and being dephosphorylated sharply thereafter. In terms of processing, crotonylation (Kcr) is specifically present in male germ cells and marks testis-specific genes in post-meiotic cells, including X-linked genes that escape sex chromosome inactivation in haploid cells. Crotonylation marks active promoters and enhancers and confers resistance to transcriptional repressors. It is also associated with post-meiotically activated genes on autosomes. ADP-ribosylated on Ser-187 in response to DNA damage. Post-translationally, citrullination at Arg-54 (H1R54ci) by PADI4 takes place within the DNA-binding site of H1 and results in its displacement from chromatin and global chromatin decondensation, thereby promoting pluripotency and stem cell maintenance. In terms of processing, hydroxybutyrylation of histones is induced by starvation.

It localises to the nucleus. The protein resides in the chromosome. Histone H1 protein binds to linker DNA between nucleosomes forming the macromolecular structure known as the chromatin fiber. Histones H1 are necessary for the condensation of nucleosome chains into higher-order structured fibers. Also acts as a regulator of individual gene transcription through chromatin remodeling, nucleosome spacing and DNA methylation. The chain is Histone H1.2 from Mus musculus (Mouse).